We begin with the raw amino-acid sequence, 299 residues long: MATH domain and coiled-coil domain-containing protein At2g42460 (299 aa).

Positions 7–130 (QKTFTWKIEN…NNTLFIEVYI (124 aa)) constitute an MATH domain. Residues 225–262 (FRVKWLKSKLDEISLARKKKVDADAARVQELEGKVKNQ) are a coiled coil.

This is MATH domain and coiled-coil domain-containing protein At2g42460 from Arabidopsis thaliana (Mouse-ear cress).